A 184-amino-acid polypeptide reads, in one-letter code: Glutathione-regulated potassium-efflux system ancillary protein KefG (184 aa).

The protein belongs to the NAD(P)H dehydrogenase (quinone) family. KefG subfamily. In terms of assembly, interacts with KefB.

The protein resides in the cell inner membrane. The enzyme catalyses a quinone + NADH + H(+) = a quinol + NAD(+). The catalysed reaction is a quinone + NADPH + H(+) = a quinol + NADP(+). Functionally, regulatory subunit of a potassium efflux system that confers protection against electrophiles. Required for full activity of KefB. The sequence is that of Glutathione-regulated potassium-efflux system ancillary protein KefG from Cronobacter sakazakii (strain ATCC BAA-894) (Enterobacter sakazakii).